The sequence spans 173 residues: Lipoprotein signal peptidase (173 aa).

The next 4 helical transmembrane spans lie at F7–V27, L41–F61, W70–N90, and A95–G115. Active-site residues include D119 and D135. Residues I130–W150 form a helical membrane-spanning segment.

The protein belongs to the peptidase A8 family.

It localises to the cell inner membrane. It carries out the reaction Release of signal peptides from bacterial membrane prolipoproteins. Hydrolyzes -Xaa-Yaa-Zaa-|-(S,diacylglyceryl)Cys-, in which Xaa is hydrophobic (preferably Leu), and Yaa (Ala or Ser) and Zaa (Gly or Ala) have small, neutral side chains.. The protein operates within protein modification; lipoprotein biosynthesis (signal peptide cleavage). Functionally, this protein specifically catalyzes the removal of signal peptides from prolipoproteins. The chain is Lipoprotein signal peptidase from Cyanothece sp. (strain PCC 7425 / ATCC 29141).